The sequence spans 223 residues: UPF0758 protein HD_0732 (223 aa).

The MPN domain maps to T98–H220. Residues H169, H171, and D182 each coordinate Zn(2+). The JAMM motif motif lies at H169–D182.

This sequence belongs to the UPF0758 family.

This is UPF0758 protein HD_0732 from Haemophilus ducreyi (strain 35000HP / ATCC 700724).